The chain runs to 138 residues: Basic phospholipase A2 sistruxin B (138 aa).

An N-terminal signal peptide occupies residues 1 to 16; the sequence is MRALWIVAVLLVGVEG. Cystine bridges form between C42-C131, C44-C60, C59-C111, C65-C138, C66-C104, C73-C97, and C91-C102. Residues Y43, G45, and G47 each contribute to the Ca(2+) site. Residue H63 is part of the active site. Residue D64 participates in Ca(2+) binding. D105 is a catalytic residue.

Heterodimer of an acidic subunit and a basic chain. The acidic subunit is non-toxic, without enzymatic activity and comprises 3 peptides that are cross-linked by 7 disulfide bridges. The basic subunit is toxic, has phospholipase A2 activity and is composed of a single chain. The cofactor is Ca(2+). In terms of tissue distribution, expressed by the venom gland.

Its subcellular location is the secreted. It carries out the reaction a 1,2-diacyl-sn-glycero-3-phosphocholine + H2O = a 1-acyl-sn-glycero-3-phosphocholine + a fatty acid + H(+). Its function is as follows. Snake venom phospholipase A2 (PLA2) that shows presynaptic neurotoxicity. PLA2 catalyzes the calcium-dependent hydrolysis of the 2-acyl groups in 3-sn-phosphoglycerides. This Sistrurus tergeminus (Western massasauga) protein is Basic phospholipase A2 sistruxin B.